The chain runs to 314 residues: Acetyl-coenzyme A carboxylase carboxyl transferase subunit alpha (314 aa).

Residues 38–292 enclose the CoA carboxyltransferase C-terminal domain; sequence RLERKSAALL…ANAIDEELDA (255 aa).

It belongs to the AccA family. Acetyl-CoA carboxylase is a heterohexamer composed of biotin carboxyl carrier protein (AccB), biotin carboxylase (AccC) and two subunits each of ACCase subunit alpha (AccA) and ACCase subunit beta (AccD).

It localises to the cytoplasm. The enzyme catalyses N(6)-carboxybiotinyl-L-lysyl-[protein] + acetyl-CoA = N(6)-biotinyl-L-lysyl-[protein] + malonyl-CoA. Its pathway is lipid metabolism; malonyl-CoA biosynthesis; malonyl-CoA from acetyl-CoA: step 1/1. Component of the acetyl coenzyme A carboxylase (ACC) complex. First, biotin carboxylase catalyzes the carboxylation of biotin on its carrier protein (BCCP) and then the CO(2) group is transferred by the carboxyltransferase to acetyl-CoA to form malonyl-CoA. This is Acetyl-coenzyme A carboxylase carboxyl transferase subunit alpha from Erythrobacter litoralis (strain HTCC2594).